A 106-amino-acid polypeptide reads, in one-letter code: Thioredoxin-like protein YdbP (106 aa).

The 106-residue stretch at 1 to 106 (MKKITTNEQF…VTEFLSEHIS (106 aa)) folds into the Thioredoxin domain. Cysteines 29 and 32 form a disulfide.

This sequence belongs to the thioredoxin family.

Functionally, participates in various redox reactions through the reversible oxidation of its active center dithiol to a disulfide and catalyzes dithiol-disulfide exchange reactions. This is Thioredoxin-like protein YdbP (ydbP) from Bacillus subtilis (strain 168).